Reading from the N-terminus, the 51-residue chain is Large ribosomal subunit protein eL39 (51 aa).

This sequence belongs to the eukaryotic ribosomal protein eL39 family.

This is Large ribosomal subunit protein eL39 from Saccharolobus islandicus (strain Y.N.15.51 / Yellowstone #2) (Sulfolobus islandicus).